The primary structure comprises 59 residues: Putative antitoxin AF_1090 (59 aa).

Belongs to the UPF0165 family.

Possibly the antitoxin component of a type II toxin-antitoxin (TA) system. This is Putative antitoxin AF_1090 from Archaeoglobus fulgidus (strain ATCC 49558 / DSM 4304 / JCM 9628 / NBRC 100126 / VC-16).